The sequence spans 651 residues: MSGELNGNDTSAQAAVSAGSVLEGAAFADEGEQHNESMKTLVLGALGVVYGDIGTSPIYAFREALHAAATNGILARSDILGVVSLIFWALTLVVTVKYVLFVLRADNNGEGGILSLMALVRGALKGRPDLILGVGICGAALFFGDAVITPAISVLSAMEGLEIVAPNLTPFVVPATVVILVTLFSVQKLGTGRVAIVFGPIMALWFVALGASGLWHIFDDPTVMAALNPYYAVRFLTVSPAVAFVTVGAVFLAMTGAEALYADLGHFGRKPIVRAWLWIVFPCLLLNYFGQAAFILSHGEAAALPFFQMIPSFALWPMVLLATAATVIASQAVITGAYSVARQAVQLNILSRLEIQHTSEKLHGQIYIPRVNLLLGLAVVILVLGFEKSSNLAAAYGIAVTGNMLVTTVLLYIVMTRIWNWRVSRALPIILGFLVIDMLFFSANIIKVHEGGWASIGIATVLVLIMWTWVRGTRHLFQKTRKAEVPLDLIVEQMAKRPPTIVPGTAVFLTGDPKSAPTALMHSLKHYKVLHENNVILTVVTASKPWVASADRARVSQYNERFMLVTLTFGYMQQPNIPRALGLCRRLGWKFDIMTTSFFLSRRSLKASVHSGMPLWQDKLFILLARTASDATEYFQIPTGRVVEIGTQVNI.

12 helical membrane passes run 41–61 (LVLGALGVVYGDIGTSPIYAF), 82–102 (VVSLIFWALTLVVTVKYVLFV), 130–150 (LILGVGICGAALFFGDAVITP), 163–183 (IVAPNLTPFVVPATVVILVTL), 194–214 (VAIVFGPIMALWFVALGASGL), 235–255 (FLTVSPAVAFVTVGAVFLAMT), 276–296 (WLWIVFPCLLLNYFGQAAFIL), 309–329 (MIPSFALWPMVLLATAATVIA), 366–386 (IYIPRVNLLLGLAVVILVLGF), 395–415 (AYGIAVTGNMLVTTVLLYIVM), 426–446 (ALPIILGFLVIDMLFFSANII), and 450–470 (EGGWASIGIATVLVLIMWTWV).

Belongs to the HAK/KUP transporter (TC 2.A.72) family.

It is found in the cell inner membrane. It carries out the reaction K(+)(in) + H(+)(in) = K(+)(out) + H(+)(out). Its function is as follows. Transport of potassium into the cell. Likely operates as a K(+):H(+) symporter. The protein is Probable potassium transport system protein Kup of Brucella melitensis biotype 2 (strain ATCC 23457).